The sequence spans 267 residues: MTIMNIQYIVECLALLREKKPLVVNITNYVVMNNTANALLALGASPIMAHSQQEMAEMMSFSGALVINIGTLDSVWTPRMHFAVEQANLNNKAVVLDPVGCGASQLRTQVARQIAEAANKLIIRANASEVIALAGENAQSKGVDALDSSDSAVGAACYVAQKYQCSVVISGETDYIVTQDAQYKLNNGHAMMPFVTGMGCTHTALTGAFAAIGDESGVVATAVLGVAGEIAAEQSAGPGSLQMNLLDTLYQLDEETLTRRLKLTVNA.

A substrate-binding site is contributed by methionine 48. Residues arginine 124 and serine 170 each contribute to the ATP site. Glycine 197 is a binding site for substrate.

This sequence belongs to the Thz kinase family. Mg(2+) serves as cofactor.

It catalyses the reaction 5-(2-hydroxyethyl)-4-methylthiazole + ATP = 4-methyl-5-(2-phosphooxyethyl)-thiazole + ADP + H(+). The protein operates within cofactor biosynthesis; thiamine diphosphate biosynthesis; 4-methyl-5-(2-phosphoethyl)-thiazole from 5-(2-hydroxyethyl)-4-methylthiazole: step 1/1. Its function is as follows. Catalyzes the phosphorylation of the hydroxyl group of 4-methyl-5-beta-hydroxyethylthiazole (THZ). The sequence is that of Hydroxyethylthiazole kinase from Aliivibrio fischeri (strain ATCC 700601 / ES114) (Vibrio fischeri).